The chain runs to 262 residues: MPKHILIFDSGIGGLSVYKEIKYQLPLAKYIYAFDNAAFPYGELTESVLIERTTHIISKLCSKFPIDIVVIACNTASTVVLPSLREKLDIPVVGVVPAIKPAALVSNKIGLLATPATVKRSYTYDLIKSFAPISDVQLLGSTRLVEMAEEKMIGIDVDITELKEILSPWQNKVDTIVLGCTHFPFLKNEIKKALGNKILLIDSGEAIARRVKQLLNGDEVESAVLFEGEVFCSAPSIKEEALNHTFKELNFSSLQCLGYPKF.

Residues 9–10 (DS) and 41–42 (YG) contribute to the substrate site. The active-site Proton donor/acceptor is Cys-73. Substrate is bound at residue 74–75 (NT). Residue Cys-180 is the Proton donor/acceptor of the active site. Position 181–182 (181–182 (TH)) interacts with substrate.

This sequence belongs to the aspartate/glutamate racemases family.

It carries out the reaction L-glutamate = D-glutamate. Its pathway is cell wall biogenesis; peptidoglycan biosynthesis. Provides the (R)-glutamate required for cell wall biosynthesis. This Aliivibrio fischeri (strain ATCC 700601 / ES114) (Vibrio fischeri) protein is Glutamate racemase.